The sequence spans 64 residues: Conotoxin Tx3.5-a (64 aa).

The first 19 residues, Met-1 to Ala-19, serve as a signal peptide directing secretion. A propeptide spanning residues Leu-20–Arg-47 is cleaved from the precursor. 3 disulfides stabilise this stretch: Cys-49-Cys-58, Cys-50-Cys-62, and Cys-54-Cys-63. Residue Cys-63 is modified to Cysteine amide.

Belongs to the conotoxin M superfamily. Post-translationally, contains 3 disulfide bonds. In terms of processing, two peptides are produced from this precursor. Conotoxin Tx3.5-b is amidated at Cys-63, conotoxin Tx3.5-a has an unmodified C-terminus. As to expression, expressed by the venom duct. Is present in all duct parts with a highest content in part 2 (proximal of the venom bulb) and then decreases in concentration toward the end of the duct.

Its subcellular location is the secreted. This Conus textile (Cloth-of-gold cone) protein is Conotoxin Tx3.5-a.